The chain runs to 711 residues: Probable cadmium-transporting ATPase (711 aa).

The region spanning 3-66 (EKTVYRVDGL…AGAFEHLKII (64 aa)) is the HMA domain. 2 residues coordinate Cd(2+): cysteine 14 and cysteine 17. 5 consecutive transmembrane segments (helical) span residues 89-109 (WRLL…IMNG), 111-131 (DFYL…YSLF), 151-171 (IAII…VVIL), 317-337 (TPAI…LFGG), and 347-367 (LSVL…VAIV). The 4-aspartylphosphate intermediate role is filled by aspartate 398. The helical transmembrane segment at 669-689 (VIKLIALLLVIPGWLTLWIAI) threads the bilayer.

Belongs to the cation transport ATPase (P-type) (TC 3.A.3) family. Type IB subfamily.

It localises to the cell membrane. It carries out the reaction Cd(2+)(in) + ATP + H2O = Cd(2+)(out) + ADP + phosphate + H(+). Couples the hydrolysis of ATP with the export of cadmium. The sequence is that of Probable cadmium-transporting ATPase (cadA) from Listeria monocytogenes.